Reading from the N-terminus, the 410-residue chain is Multifunctional CCA protein (410 aa).

ATP-binding residues include G8 and R11. Residues G8 and R11 each contribute to the CTP site. Mg(2+) contacts are provided by E21 and D23. ATP-binding residues include R91, R137, and R140. R91, R137, and R140 together coordinate CTP. An HD domain is found at 228 to 329 (TGIHVMMALR…LKLFDRLDVW (102 aa)).

This sequence belongs to the tRNA nucleotidyltransferase/poly(A) polymerase family. Bacterial CCA-adding enzyme type 1 subfamily. In terms of assembly, monomer. Can also form homodimers and oligomers. Requires Mg(2+) as cofactor. Ni(2+) is required as a cofactor.

The catalysed reaction is a tRNA precursor + 2 CTP + ATP = a tRNA with a 3' CCA end + 3 diphosphate. It carries out the reaction a tRNA with a 3' CCA end + 2 CTP + ATP = a tRNA with a 3' CCACCA end + 3 diphosphate. In terms of biological role, catalyzes the addition and repair of the essential 3'-terminal CCA sequence in tRNAs without using a nucleic acid template. Adds these three nucleotides in the order of C, C, and A to the tRNA nucleotide-73, using CTP and ATP as substrates and producing inorganic pyrophosphate. tRNA 3'-terminal CCA addition is required both for tRNA processing and repair. Also involved in tRNA surveillance by mediating tandem CCA addition to generate a CCACCA at the 3' terminus of unstable tRNAs. While stable tRNAs receive only 3'-terminal CCA, unstable tRNAs are marked with CCACCA and rapidly degraded. The sequence is that of Multifunctional CCA protein from Tolumonas auensis (strain DSM 9187 / NBRC 110442 / TA 4).